The primary structure comprises 340 residues: Protein B17 (340 aa).

It belongs to the orthopoxvirus B17 protein family.

In Variola virus (isolate Human/India/Ind3/1967) (VARV), this protein is Protein B17.